Reading from the N-terminus, the 199-residue chain is Recombination protein RecR (199 aa).

The segment at Cys57–Cys72 adopts a C4-type zinc-finger fold. The 96-residue stretch at Asp81–Pro176 folds into the Toprim domain.

Belongs to the RecR family.

May play a role in DNA repair. It seems to be involved in an RecBC-independent recombinational process of DNA repair. It may act with RecF and RecO. The protein is Recombination protein RecR of Shewanella halifaxensis (strain HAW-EB4).